The chain runs to 336 residues: Homeobox-leucine zipper protein HAT14 (336 aa).

2 disordered regions span residues 53–141 (RSLS…PDSV) and 160–194 (SNKR…KLRL). A compositionally biased stretch (basic and acidic residues) spans 64 to 81 (EDEKKKPAPRAKKSDEFR). A compositionally biased stretch (acidic residues) spans 120 to 129 (VEEEEEEEEA). The span at 130-141 (VPSMSVSPPDSV) shows a compositional bias: low complexity. The span at 160–173 (SNKRDIDDEVERSA) shows a compositional bias: basic and acidic residues. Residues 187–246 (STRKKLRLSKDQSAFLEDSFKEHSTLNPKQKIALAKQLNLRPRQVEVWFQNRRARTKLKQ) constitute a DNA-binding region (homeobox). The tract at residues 254-275 (LKRCCESLTEENRRLQKEVKEL) is leucine-zipper.

The protein belongs to the HD-ZIP homeobox family. Class II subfamily.

The protein localises to the nucleus. Probable transcription factor. In Arabidopsis thaliana (Mouse-ear cress), this protein is Homeobox-leucine zipper protein HAT14 (HAT14).